Here is a 269-residue protein sequence, read N- to C-terminus: UPF0162 protein YchA (269 aa).

It belongs to the UPF0162 family.

This chain is UPF0162 protein YchA (ychA), found in Escherichia coli O157:H7.